The sequence spans 614 residues: Pyruvate decarboxylase 2 (614 aa).

Substrate-binding residues include aspartate 50 and histidine 137. Residues 415–523 are thiamine pyrophosphate binding; sequence DSWFNCQKLK…FLINNGGYTI (109 aa). Mg(2+) contacts are provided by aspartate 491, asparagine 518, and glycine 520. Glutamate 524 lines the substrate pocket.

This sequence belongs to the TPP enzyme family. Homotetramer. It depends on a metal cation as a cofactor. The cofactor is thiamine diphosphate. As to expression, pollen.

The enzyme catalyses a 2-oxocarboxylate + H(+) = an aldehyde + CO2. The chain is Pyruvate decarboxylase 2 (PDC2) from Nicotiana tabacum (Common tobacco).